A 2216-amino-acid chain; its full sequence is RNA-directed RNA polymerase L (2216 aa).

The segment at 26-289 (KTSFLSQVNL…ETRTAMLDER (264 aa)) is endonuclease. Mn(2+)-binding residues include Glu51, Asp88, and Glu101. Residue Lys114 is part of the active site. A RdRp catalytic domain is found at 1167 to 1364 (LDMKCVVRLS…YLSSKFNKFV (198 aa)). Asp1323 is a binding site for Mg(2+).

Belongs to the Bunyavirales RNA polymerase family. Homomultimer; the oligomeric structure is essential for the polymerase activity. Interacts with nucleoprotein N. Interacts with protein Z; this interaction inhibits viral transcription and replication, Z partially blocks the product exit tunnel for the releasing nascent RNA product. Mn(2+) serves as cofactor. The cofactor is Mg(2+).

It localises to the virion. The protein resides in the host cytoplasm. It catalyses the reaction RNA(n) + a ribonucleoside 5'-triphosphate = RNA(n+1) + diphosphate. Functionally, RNA-dependent RNA polymerase, which is responsible for the replication and transcription of the viral RNA genome using antigenomic RNA as an intermediate. During transcription, synthesizes subgenomic RNAs and assures their capping by a cap-snatching mechanism, which involves the endonuclease activity cleaving the host capped pre-mRNAs. These short capped RNAs are then used as primers for viral transcription. The 3'-end of subgenomic mRNAs molecules are heterogeneous and not polyadenylated. The replicase function is to direct synthesis of antigenomic and genomic RNA which are encapsidated and non capped. As a consequence of the use of the same enzyme for both transcription and replication, these mechanisms need to be well coordinated. These processes may be regulated by proteins N and Z in a dose-dependent manner. Z protein inhibits the viral polymerase L und thus the viral transcription and RNA synthesis. The chain is RNA-directed RNA polymerase L from Bear Canyon mammarenavirus (isolate Mouse/United States/AV A0070039/2000) (BCNV).